We begin with the raw amino-acid sequence, 247 residues long: tRNA uridine(34) hydroxylase (247 aa).

Residues 124–218 (TKQNVILIDT…YLEDTHNKNN (95 aa)) form the Rhodanese domain. Residue C178 is the Cysteine persulfide intermediate of the active site.

The protein belongs to the TrhO family.

It carries out the reaction uridine(34) in tRNA + AH2 + O2 = 5-hydroxyuridine(34) in tRNA + A + H2O. Its function is as follows. Catalyzes oxygen-dependent 5-hydroxyuridine (ho5U) modification at position 34 in tRNAs. The protein is tRNA uridine(34) hydroxylase of Rickettsia prowazekii (strain Madrid E).